Here is a 302-residue protein sequence, read N- to C-terminus: Methionyl-tRNA formyltransferase (302 aa).

(6S)-5,6,7,8-tetrahydrofolate is bound at residue 103–106 (SLLP).

Belongs to the Fmt family.

The catalysed reaction is L-methionyl-tRNA(fMet) + (6R)-10-formyltetrahydrofolate = N-formyl-L-methionyl-tRNA(fMet) + (6S)-5,6,7,8-tetrahydrofolate + H(+). Attaches a formyl group to the free amino group of methionyl-tRNA(fMet). The formyl group appears to play a dual role in the initiator identity of N-formylmethionyl-tRNA by promoting its recognition by IF2 and preventing the misappropriation of this tRNA by the elongation apparatus. The sequence is that of Methionyl-tRNA formyltransferase from Pseudothermotoga lettingae (strain ATCC BAA-301 / DSM 14385 / NBRC 107922 / TMO) (Thermotoga lettingae).